A 191-amino-acid chain; its full sequence is IMP cyclohydrolase (191 aa).

The protein belongs to the archaeal IMP cyclohydrolase family.

The enzyme catalyses IMP + H2O = 5-formamido-1-(5-phospho-D-ribosyl)imidazole-4-carboxamide. The protein operates within purine metabolism; IMP biosynthesis via de novo pathway; IMP from 5-formamido-1-(5-phospho-D-ribosyl)imidazole-4-carboxamide: step 1/1. Functionally, catalyzes the cyclization of 5-formylamidoimidazole-4-carboxamide ribonucleotide to IMP. This is IMP cyclohydrolase from Natronomonas pharaonis (strain ATCC 35678 / DSM 2160 / CIP 103997 / JCM 8858 / NBRC 14720 / NCIMB 2260 / Gabara) (Halobacterium pharaonis).